Reading from the N-terminus, the 443-residue chain is MEDDEDIRSQGSDSPDPSSSPPAGRITVTVASAGPPSYSLTPPGNSSQKDPDALALALLPIQASGGGNNSSGRPTGGGGREDCWSEAATAVLIDAWGERYLELSRGNLKQKHWKEVAEIVSSREDYGKIPKTDIQCKNRIDTVKKKYKQEKVRIANGGGRSRWVFFDKLDRLIGSTAKIPTATSGVSGPVGGLHKIPMGIPMGSRSNLYHQQAKAATPPFNNLDRLIGATARVSAASFGGSGGGGGGGSVNVPMGIPMSSRSAPFGQQGRTLPQQGRTLPQQQQQGMMVKRCSESKRWRFRKRNASDSDSESEAAMSDDSGDSLPPPPLSKRMKTEEKKKQDGDGVGNKWRELTRAIMRFGEAYEQTENAKLQQVVEMEKERMKFLKELELQRMQFFVKTQLEISQLKQQHGRRMGNTSNDHHHSRKNNINAIVNNNNDLGNN.

Positions 1 to 82 (MEDDEDIRSQ…RPTGGGGRED (82 aa)) are disordered. Positions 38–48 (YSLTPPGNSSQ) are enriched in polar residues. Over residues 64-78 (SGGGNNSSGRPTGGG) the composition is skewed to gly residues. The Myb-like domain maps to 84 to 144 (WSEAATAVLI…QCKNRIDTVK (61 aa)). Disordered regions lie at residues 238-350 (FGGS…GNKW) and 413-443 (RRMG…LGNN). The span at 239-249 (GGSGGGGGGGS) shows a compositional bias: gly residues. Over residues 271–286 (TLPQQGRTLPQQQQQG) the composition is skewed to low complexity. A Bipartite nuclear localization signal motif is present at residues 290-303 (KRCSESKRWRFRKR). A compositionally biased stretch (basic and acidic residues) spans 333–350 (MKTEEKKKQDGDGVGNKW). A coiled-coil region spans residues 360–414 (FGEAYEQTENAKLQQVVEMEKERMKFLKELELQRMQFFVKTQLEISQLKQQHGRR). The segment covering 428 to 443 (NNINAIVNNNNDLGNN) has biased composition (low complexity).

It localises to the nucleus. In terms of biological role, transcription regulator that may repress the maturation program during early embryogenesis. The sequence is that of Trihelix transcription factor ASIL2 from Arabidopsis thaliana (Mouse-ear cress).